The chain runs to 45 residues: Photosystem II reaction center protein K (45 aa).

The propeptide occupies 1-8 (MTQIFLIG). A helical membrane pass occupies residues 20-40 (IVDVLPIIPVLFLLLAFVWQA).

The protein belongs to the PsbK family. PSII is composed of 1 copy each of membrane proteins PsbA, PsbB, PsbC, PsbD, PsbE, PsbF, PsbH, PsbI, PsbJ, PsbK, PsbL, PsbM, PsbT, PsbX, PsbY, PsbZ, Psb30/Ycf12, at least 3 peripheral proteins of the oxygen-evolving complex and a large number of cofactors. It forms dimeric complexes.

It localises to the plastid. It is found in the chloroplast thylakoid membrane. In terms of biological role, one of the components of the core complex of photosystem II (PSII). PSII is a light-driven water:plastoquinone oxidoreductase that uses light energy to abstract electrons from H(2)O, generating O(2) and a proton gradient subsequently used for ATP formation. It consists of a core antenna complex that captures photons, and an electron transfer chain that converts photonic excitation into a charge separation. This chain is Photosystem II reaction center protein K, found in Ostreococcus tauri.